The chain runs to 309 residues: Acetylglutamate kinase (309 aa).

Substrate is bound by residues 82–83, arginine 104, and asparagine 206; that span reads GG.

The protein belongs to the acetylglutamate kinase family. ArgB subfamily.

It localises to the cytoplasm. The enzyme catalyses N-acetyl-L-glutamate + ATP = N-acetyl-L-glutamyl 5-phosphate + ADP. The protein operates within amino-acid biosynthesis; L-arginine biosynthesis; N(2)-acetyl-L-ornithine from L-glutamate: step 2/4. Its function is as follows. Catalyzes the ATP-dependent phosphorylation of N-acetyl-L-glutamate. The protein is Acetylglutamate kinase of Cupriavidus pinatubonensis (strain JMP 134 / LMG 1197) (Cupriavidus necator (strain JMP 134)).